The following is a 114-amino-acid chain: N(4)-acetylcytidine amidohydrolase (114 aa).

Residues Thr-8 to Ile-93 enclose the ASCH domain. Catalysis depends on Lys-22, which acts as the Proton acceptor. Thr-25 acts as the Nucleophile in catalysis. The active-site Proton donor is the Glu-75.

It belongs to the N(4)-acetylcytidine amidohydrolase family.

The catalysed reaction is N(4)-acetylcytidine + H2O = cytidine + acetate + H(+). It catalyses the reaction N(4)-acetyl-2'-deoxycytidine + H2O = 2'-deoxycytidine + acetate + H(+). It carries out the reaction N(4)-acetylcytosine + H2O = cytosine + acetate + H(+). In terms of biological role, catalyzes the hydrolysis of N(4)-acetylcytidine (ac4C). In Vibrio cholerae serotype O1 (strain ATCC 39541 / Classical Ogawa 395 / O395), this protein is N(4)-acetylcytidine amidohydrolase.